A 208-amino-acid chain; its full sequence is 3-demethoxyubiquinol 3-hydroxylase (208 aa).

Fe cation-binding residues include Glu-57, Glu-87, His-90, Glu-139, Glu-171, and His-174.

It belongs to the COQ7 family. Fe cation is required as a cofactor.

The protein localises to the cell membrane. The catalysed reaction is a 5-methoxy-2-methyl-3-(all-trans-polyprenyl)benzene-1,4-diol + AH2 + O2 = a 3-demethylubiquinol + A + H2O. It participates in cofactor biosynthesis; ubiquinone biosynthesis. In terms of biological role, catalyzes the hydroxylation of 2-nonaprenyl-3-methyl-6-methoxy-1,4-benzoquinol during ubiquinone biosynthesis. This chain is 3-demethoxyubiquinol 3-hydroxylase, found in Burkholderia multivorans (strain ATCC 17616 / 249).